The chain runs to 235 residues: Phosphoribosylaminoimidazole-succinocarboxamide synthase (235 aa).

The protein belongs to the SAICAR synthetase family.

It carries out the reaction 5-amino-1-(5-phospho-D-ribosyl)imidazole-4-carboxylate + L-aspartate + ATP = (2S)-2-[5-amino-1-(5-phospho-beta-D-ribosyl)imidazole-4-carboxamido]succinate + ADP + phosphate + 2 H(+). Its pathway is purine metabolism; IMP biosynthesis via de novo pathway; 5-amino-1-(5-phospho-D-ribosyl)imidazole-4-carboxamide from 5-amino-1-(5-phospho-D-ribosyl)imidazole-4-carboxylate: step 1/2. This Nautilia profundicola (strain ATCC BAA-1463 / DSM 18972 / AmH) protein is Phosphoribosylaminoimidazole-succinocarboxamide synthase.